The sequence spans 251 residues: 5'-nucleotidase SurE (251 aa).

Residues D8, D9, S40, and N95 each contribute to the a divalent metal cation site.

It belongs to the SurE nucleotidase family. It depends on a divalent metal cation as a cofactor.

The protein resides in the cytoplasm. The catalysed reaction is a ribonucleoside 5'-phosphate + H2O = a ribonucleoside + phosphate. Functionally, nucleotidase that shows phosphatase activity on nucleoside 5'-monophosphates. In Maridesulfovibrio salexigens (strain ATCC 14822 / DSM 2638 / NCIMB 8403 / VKM B-1763) (Desulfovibrio salexigens), this protein is 5'-nucleotidase SurE.